The sequence spans 88 residues: MLAPVKKTEIISQFRTHDSDTGSPQVQIAILSERIGELTEHFKTHAKDHSSRRGLLKLVSKRRRLLDYLKLHDTDSYRDVIGKLGIRK.

This sequence belongs to the universal ribosomal protein uS15 family. As to quaternary structure, part of the 30S ribosomal subunit. Forms a bridge to the 50S subunit in the 70S ribosome, contacting the 23S rRNA.

Functionally, one of the primary rRNA binding proteins, it binds directly to 16S rRNA where it helps nucleate assembly of the platform of the 30S subunit by binding and bridging several RNA helices of the 16S rRNA. In terms of biological role, forms an intersubunit bridge (bridge B4) with the 23S rRNA of the 50S subunit in the ribosome. The chain is Small ribosomal subunit protein uS15 from Acidobacterium capsulatum (strain ATCC 51196 / DSM 11244 / BCRC 80197 / JCM 7670 / NBRC 15755 / NCIMB 13165 / 161).